The chain runs to 823 residues: Semaphorin-4B (823 aa).

An N-terminal signal peptide occupies residues 1 to 30; the sequence is MGRASRSAVLRRALLLLLLLLLLRTTTTRA. The Extracellular portion of the chain corresponds to 31–703; sequence LGPRISVPLG…WGADKSYWNE (673 aa). One can recognise a Sema domain in the interval 34-510; sequence RISVPLGSEE…SHSGVVQVPV (477 aa). N53, N56, and N83 each carry an N-linked (GlcNAc...) asparagine glycan. C107 and C118 are disulfide-bonded. N-linked (GlcNAc...) asparagine glycosylation occurs at N129. Disulfide bonds link C136–C145, C273–C386, and C297–C346. N397 and N512 each carry an N-linked (GlcNAc...) asparagine glycan. In terms of domain architecture, PSI spans 512–582; it reads NCSLYPTCGD…RFLVPGKPCK (71 aa). A disulfide bridge connects residues C513 and C530. 3 N-linked (GlcNAc...) asparagine glycosylation sites follow: N567, N615, and N680. Residues 589 to 649 form the Ig-like C2-type domain; it reads NTVNTLACPL…FQCWSIEEGF (61 aa). A disulfide bridge connects residues C596 and C642. Residues 704 to 724 traverse the membrane as a helical segment; sequence FLVMCTLFVFAMVLLFLFFLY. Topologically, residues 725-823 are cytoplasmic; sequence RHRDGMKLFL…LGSEIRDSVV (99 aa). Residues S779, S780, S804, and S816 each carry the phosphoserine modification.

Belongs to the semaphorin family. In terms of assembly, interacts with GIPC PDZ domain.

The protein localises to the membrane. In terms of biological role, inhibits axonal extension by providing local signals to specify territories inaccessible for growing axons. The chain is Semaphorin-4B from Mus musculus (Mouse).